We begin with the raw amino-acid sequence, 75 residues long: Small capsomere-interacting protein (75 aa).

This sequence belongs to the herpesviridae small capsomere-interacting protein family. Interacts with the major capsid protein/MCP.

The protein localises to the virion. It is found in the host nucleus. Participates in the assembly of the infectious particles by decorating the outer surface of the capsid shell and thus forming a layer between the capsid and the tegument. Complexes composed of the major capsid protein and small capsomere-interacting protein/SCP assemble together in the host cytoplasm and are translocated to the nucleus, where they accumulate and participate in capsid assembly. The chain is Small capsomere-interacting protein from Homo sapiens (Human).